Here is a 455-residue protein sequence, read N- to C-terminus: UDP-N-acetylmuramoylalanine--D-glutamate ligase (455 aa).

117 to 123 is an ATP binding site; the sequence is GTNGKTT.

This sequence belongs to the MurCDEF family.

The protein localises to the cytoplasm. It carries out the reaction UDP-N-acetyl-alpha-D-muramoyl-L-alanine + D-glutamate + ATP = UDP-N-acetyl-alpha-D-muramoyl-L-alanyl-D-glutamate + ADP + phosphate + H(+). Its pathway is cell wall biogenesis; peptidoglycan biosynthesis. Functionally, cell wall formation. Catalyzes the addition of glutamate to the nucleotide precursor UDP-N-acetylmuramoyl-L-alanine (UMA). The protein is UDP-N-acetylmuramoylalanine--D-glutamate ligase of Pelotomaculum thermopropionicum (strain DSM 13744 / JCM 10971 / SI).